The following is a 209-amino-acid chain: Uracil phosphoribosyltransferase (209 aa).

5-phospho-alpha-D-ribose 1-diphosphate is bound by residues arginine 79, arginine 104, and 131 to 139 (DPMLATGGS). Uracil-binding positions include isoleucine 194 and 199–201 (GDA). Aspartate 200 is a binding site for 5-phospho-alpha-D-ribose 1-diphosphate.

This sequence belongs to the UPRTase family. Requires Mg(2+) as cofactor.

The catalysed reaction is UMP + diphosphate = 5-phospho-alpha-D-ribose 1-diphosphate + uracil. It functions in the pathway pyrimidine metabolism; UMP biosynthesis via salvage pathway; UMP from uracil: step 1/1. With respect to regulation, allosterically activated by GTP. Catalyzes the conversion of uracil and 5-phospho-alpha-D-ribose 1-diphosphate (PRPP) to UMP and diphosphate. The polypeptide is Uracil phosphoribosyltransferase (Lachnoclostridium phytofermentans (strain ATCC 700394 / DSM 18823 / ISDg) (Clostridium phytofermentans)).